Reading from the N-terminus, the 477-residue chain is Aspartyl/glutamyl-tRNA(Asn/Gln) amidotransferase subunit B (477 aa).

Belongs to the GatB/GatE family. GatB subfamily. In terms of assembly, heterotrimer of A, B and C subunits.

It catalyses the reaction L-glutamyl-tRNA(Gln) + L-glutamine + ATP + H2O = L-glutaminyl-tRNA(Gln) + L-glutamate + ADP + phosphate + H(+). The catalysed reaction is L-aspartyl-tRNA(Asn) + L-glutamine + ATP + H2O = L-asparaginyl-tRNA(Asn) + L-glutamate + ADP + phosphate + 2 H(+). Allows the formation of correctly charged Asn-tRNA(Asn) or Gln-tRNA(Gln) through the transamidation of misacylated Asp-tRNA(Asn) or Glu-tRNA(Gln) in organisms which lack either or both of asparaginyl-tRNA or glutaminyl-tRNA synthetases. The reaction takes place in the presence of glutamine and ATP through an activated phospho-Asp-tRNA(Asn) or phospho-Glu-tRNA(Gln). The chain is Aspartyl/glutamyl-tRNA(Asn/Gln) amidotransferase subunit B from Methylobacillus flagellatus (strain ATCC 51484 / DSM 6875 / VKM B-1610 / KT).